Consider the following 59-residue polypeptide: Large ribosomal subunit protein uL30 (59 aa).

The protein belongs to the universal ribosomal protein uL30 family. Part of the 50S ribosomal subunit.

The sequence is that of Large ribosomal subunit protein uL30 from Haemophilus ducreyi (strain 35000HP / ATCC 700724).